Here is a 456-residue protein sequence, read N- to C-terminus: RUN domain-containing protein 3B (456 aa).

A disordered region spans residues 1 to 24 (MASRSLGGLSGIRGGGGGGGKKSL). Gly residues predominate over residues 8–21 (GLSGIRGGGGGGGK). Omega-N-methylarginine is present on arginine 13. An RUN domain is found at 57 to 189 (DDSSPEFNNF…IDFSFCLKGE (133 aa)). A phosphoserine mark is found at serine 215 and serine 216. The disordered stretch occupies residues 216 to 237 (SDEEELRTLGSSGSESSTPENV). Residues 224-235 (LGSSGSESSTPE) are compositionally biased toward polar residues. Residues 300–325 (AHKLEKEQLEYIIVELQDQLTVLKNN) are a coiled coil. Residues 382 to 405 (SLSQTSLDPGQSQEGDGKQDTLNV) show a composition bias toward polar residues. The tract at residues 382 to 411 (SLSQTSLDPGQSQEGDGKQDTLNVMSEGKE) is disordered.

This sequence belongs to the RUNDC3 family. Interacts with RAP2A.

The sequence is that of RUN domain-containing protein 3B (RUNDC3B) from Pongo abelii (Sumatran orangutan).